A 381-amino-acid chain; its full sequence is Homoserine O-succinyltransferase (381 aa).

The AB hydrolase-1 domain maps to 45-360 (NAVLVCHALN…PHGHDAFLLD (316 aa)). Serine 151 functions as the Nucleophile in the catalytic mechanism. Arginine 221 lines the substrate pocket. Catalysis depends on residues aspartate 321 and histidine 354. Residue aspartate 355 coordinates substrate.

It belongs to the AB hydrolase superfamily. MetX family. Homodimer.

The protein resides in the cytoplasm. It catalyses the reaction L-homoserine + succinyl-CoA = O-succinyl-L-homoserine + CoA. Its pathway is amino-acid biosynthesis; L-methionine biosynthesis via de novo pathway; O-succinyl-L-homoserine from L-homoserine: step 1/1. Transfers a succinyl group from succinyl-CoA to L-homoserine, forming succinyl-L-homoserine. In Burkholderia lata (strain ATCC 17760 / DSM 23089 / LMG 22485 / NCIMB 9086 / R18194 / 383), this protein is Homoserine O-succinyltransferase.